Here is a 306-residue protein sequence, read N- to C-terminus: Ribosomal RNA small subunit methyltransferase H (306 aa).

S-adenosyl-L-methionine contacts are provided by residues 36–38, Asp56, Phe80, Asp97, and Gln104; that span reads GGH. Residues 280-306 are disordered; the sequence is ASEEEVAGNPRSRSAVMRVAERTGEAA.

This sequence belongs to the methyltransferase superfamily. RsmH family.

The protein resides in the cytoplasm. It catalyses the reaction cytidine(1402) in 16S rRNA + S-adenosyl-L-methionine = N(4)-methylcytidine(1402) in 16S rRNA + S-adenosyl-L-homocysteine + H(+). Its function is as follows. Specifically methylates the N4 position of cytidine in position 1402 (C1402) of 16S rRNA. This is Ribosomal RNA small subunit methyltransferase H from Polaromonas naphthalenivorans (strain CJ2).